The chain runs to 294 residues: Acetyl-coenzyme A carboxylase carboxyl transferase subunit beta (294 aa).

Positions 30-294 (IMTKCPECKK…PETGGESDGE (265 aa)) constitute a CoA carboxyltransferase N-terminal domain. Positions 34, 37, 53, and 56 each coordinate Zn(2+). Residues 34-56 (CPECKKIMYTKELQKNLMVCNYC) form a C4-type zinc finger.

This sequence belongs to the AccD/PCCB family. In terms of assembly, acetyl-CoA carboxylase is a heterohexamer composed of biotin carboxyl carrier protein (AccB), biotin carboxylase (AccC) and two subunits each of ACCase subunit alpha (AccA) and ACCase subunit beta (AccD). Zn(2+) serves as cofactor.

It localises to the cytoplasm. It catalyses the reaction N(6)-carboxybiotinyl-L-lysyl-[protein] + acetyl-CoA = N(6)-biotinyl-L-lysyl-[protein] + malonyl-CoA. The protein operates within lipid metabolism; malonyl-CoA biosynthesis; malonyl-CoA from acetyl-CoA: step 1/1. Component of the acetyl coenzyme A carboxylase (ACC) complex. Biotin carboxylase (BC) catalyzes the carboxylation of biotin on its carrier protein (BCCP) and then the CO(2) group is transferred by the transcarboxylase to acetyl-CoA to form malonyl-CoA. The chain is Acetyl-coenzyme A carboxylase carboxyl transferase subunit beta from Listeria welshimeri serovar 6b (strain ATCC 35897 / DSM 20650 / CCUG 15529 / CIP 8149 / NCTC 11857 / SLCC 5334 / V8).